A 326-amino-acid chain; its full sequence is GTP cyclohydrolase MptA (326 aa).

It belongs to the GTP cyclohydrolase IV family. Homodimer. It depends on Fe(2+) as a cofactor.

The enzyme catalyses GTP + H2O = 7,8-dihydroneopterin 2',3'-cyclic phosphate + formate + diphosphate + H(+). It participates in cofactor biosynthesis; 5,6,7,8-tetrahydromethanopterin biosynthesis. Converts GTP to 7,8-dihydro-D-neopterin 2',3'-cyclic phosphate, the first intermediate in the biosynthesis of coenzyme methanopterin. The protein is GTP cyclohydrolase MptA of Methanoregula boonei (strain DSM 21154 / JCM 14090 / 6A8).